The following is a 287-amino-acid chain: 3-beta-hydroxysteroid sulfotransferase (287 aa).

Lys-44–Trp-49 is a 3'-phosphoadenylyl sulfate binding site. Trp-72 and Trp-77 together coordinate substrate. His-99 acts as the Proton acceptor in catalysis. Residues Arg-121, Ser-129, Tyr-184, Ser-218–Met-223, and Arg-247–Gly-249 contribute to the 3'-phosphoadenylyl sulfate site.

It belongs to the sulfotransferase 1 family. As to quaternary structure, homodimer. Liver, intestine and kidney.

Its subcellular location is the cytoplasm. It catalyses the reaction an alcohol + 3'-phosphoadenylyl sulfate = an alkyl sulfate + adenosine 3',5'-bisphosphate + H(+). Functionally, sulfotransferase that utilizes 3'-phospho-5'-adenylyl sulfate (PAPS) as sulfonate donor to catalyze the sulfonation of 3-beta-hydroxyl groups of neutral steroids. High preference for C21 steroid (pregnenolone). The chain is 3-beta-hydroxysteroid sulfotransferase (STD2) from Cavia porcellus (Guinea pig).